We begin with the raw amino-acid sequence, 741 residues long: Catalase-peroxidase (741 aa).

Positions 1 to 21 (MRNFRRFTIALLVLFLGPIGA) are cleaved as a signal peptide. Positions 109 to 231 (WHSAGTYRIS…LAAVQMGLIY (123 aa)) form a cross-link, tryptophyl-tyrosyl-methioninium (Trp-Tyr) (with M-257). H110 functions as the Proton acceptor in the catalytic mechanism. The segment at residues 231 to 257 (YVNPEGPNGNPDPLAAAKDIRETFGRM) is a cross-link (tryptophyl-tyrosyl-methioninium (Tyr-Met) (with W-109)). Heme b is bound at residue H272.

The protein belongs to the peroxidase family. Peroxidase/catalase subfamily. Homodimer or homotetramer. Requires heme b as cofactor. In terms of processing, formation of the three residue Trp-Tyr-Met cross-link is important for the catalase, but not the peroxidase activity of the enzyme.

The enzyme catalyses H2O2 + AH2 = A + 2 H2O. The catalysed reaction is 2 H2O2 = O2 + 2 H2O. In terms of biological role, bifunctional enzyme with both catalase and broad-spectrum peroxidase activity. This is Catalase-peroxidase from Leptospira biflexa serovar Patoc (strain Patoc 1 / Ames).